The chain runs to 143 residues: NADH-quinone oxidoreductase subunit A (143 aa).

3 consecutive transmembrane segments (helical) span residues 8-28 (FGNV…GYLT), 63-83 (FYVV…LFPW), and 93-113 (FALV…VYAW).

It belongs to the complex I subunit 3 family. In terms of assembly, NDH-1 is composed of 14 different subunits. Subunits NuoA, H, J, K, L, M, N constitute the membrane sector of the complex.

It is found in the cell inner membrane. It carries out the reaction a quinone + NADH + 5 H(+)(in) = a quinol + NAD(+) + 4 H(+)(out). NDH-1 shuttles electrons from NADH, via FMN and iron-sulfur (Fe-S) centers, to quinones in the respiratory chain. The immediate electron acceptor for the enzyme in this species is believed to be a menaquinone. Couples the redox reaction to proton translocation (for every two electrons transferred, four hydrogen ions are translocated across the cytoplasmic membrane), and thus conserves the redox energy in a proton gradient. This chain is NADH-quinone oxidoreductase subunit A, found in Chlorobium phaeovibrioides (strain DSM 265 / 1930) (Prosthecochloris vibrioformis (strain DSM 265)).